The chain runs to 780 residues: Pumilio domain-containing protein C4G8.03c (780 aa).

Disordered regions lie at residues 1-29 (MVNRDAYNELNLNKKSQETNRKPSPLSSY), 298-330 (LSHFPDHLDPSRIPSPYQPSSLQPLESRKLHSK), and 358-411 (NHHS…GKTV). Residues 298 to 307 (LSHFPDHLDP) are compositionally biased toward basic and acidic residues. Residues 311–322 (PSPYQPSSLQPL) show a composition bias toward low complexity. Polar residues predominate over residues 358–382 (NHHSSLSMDNDPTNVSTKNRNNQTV). The PUM-HD domain occupies 435–778 (EKSDDLSNLL…HILAKLTSST (344 aa)). Pumilio repeat units follow at residues 462 to 497 (GFLGHLSTICKDQYGCRYLQKLLDENPKVNASLFFP), 498 to 533 (EIRQSVVQLMIDPFGNYMCQKLFVYASREQKLSMLN), 534 to 569 (GIGEGIVDICSNLYGTRSMQNIIDKLTSNEQISLLL), 570 to 606 (KIIIPSLTTLACDNNGTHVLQKCIAKFPPEKLEPLFL), 607 to 642 (SMEENLITLATNRHGCCILQRCLDRTNGDIQERLVN), 643 to 678 (SIIKSCLLLVQNAYGNYLVQHVLELNIQPYTERIIE), 679 to 714 (KFFGNICKLSLQKFSSNAIEQCIRTASPSTREQMLQ), 715 to 752 (EFLSFPNIEQLLDDCYANYVMQRFLNVADESQKFLILR), and 753 to 780 (SISHVIPKIQNTRHGRHILAKLTSSTSS).

This chain is Pumilio domain-containing protein C4G8.03c, found in Schizosaccharomyces pombe (strain 972 / ATCC 24843) (Fission yeast).